The chain runs to 197 residues: MPKYYCEYCDIYLTHSSPVGRRQHNQGRKHISAKIEYFQNLLREEGITPQNFLGFLGNQGYNNTLANPMMNNFMPGNYNAYMKYNPMRNYHHSNRNSNYQHSIGMHNNKYSRAGYVPPGSNKYPNNHFHNNKRINNIPKPYNNYTNKPITNSSYKNDKQDYRNNNESNDNMNSNNFSNYQVNKENANFVNKNNEQPN.

The Matrin-type zinc finger occupies 4 to 36 (YYCEYCDIYLTHSSPVGRRQHNQGRKHISAKIE). Residues 128-137 (FHNNKRINNI) are compositionally biased toward low complexity. Positions 128-178 (FHNNKRINNIPKPYNNYTNKPITNSSYKNDKQDYRNNNESNDNMNSNNFSN) are disordered. Over residues 142–154 (NNYTNKPITNSSY) the composition is skewed to polar residues. The span at 164-178 (NNESNDNMNSNNFSN) shows a compositional bias: low complexity.

Belongs to the U1 small nuclear ribonucleoprotein C family. U1 snRNP is composed of the 7 core Sm proteins B/B', D1, D2, D3, E, F and G that assemble in a heptameric protein ring on the Sm site of the small nuclear RNA to form the core snRNP, and at least 3 U1 snRNP-specific proteins U1-70K, U1-A and U1-C. U1-C interacts with U1 snRNA and the 5' splice-site region of the pre-mRNA.

Its subcellular location is the nucleus. Functionally, component of the spliceosomal U1 snRNP, which is essential for recognition of the pre-mRNA 5' splice-site and the subsequent assembly of the spliceosome. U1-C is directly involved in initial 5' splice-site recognition for both constitutive and regulated alternative splicing. The interaction with the 5' splice-site seems to precede base-pairing between the pre-mRNA and the U1 snRNA. Stimulates commitment or early (E) complex formation by stabilizing the base pairing of the 5' end of the U1 snRNA and the 5' splice-site region. This is U1 small nuclear ribonucleoprotein C (SNRPC) from Plasmodium berghei (strain Anka).